The primary structure comprises 181 residues: TATA-box-binding protein (181 aa).

Tandem repeats lie at residues Ile-7–Leu-83 and Val-98–Val-173.

It belongs to the TBP family.

In terms of biological role, general factor that plays a role in the activation of archaeal genes transcribed by RNA polymerase. Binds specifically to the TATA box promoter element which lies close to the position of transcription initiation. In Methanococcus aeolicus (strain ATCC BAA-1280 / DSM 17508 / OCM 812 / Nankai-3), this protein is TATA-box-binding protein.